The sequence spans 806 residues: Ent-atiserene synthase KSL4, chloroplastic (806 aa).

The N-terminal 75 residues, 1–75, are a transit peptide targeting the chloroplast; the sequence is MGIVALILIK…AKLFKKNEVC (75 aa). A disordered region spans residues 33-56; the sequence is ASLAGSGLPKTTPPKTASLQSHSP. A compositionally biased stretch (polar residues) spans 45–55; that stretch reads PPKTASLQSHS. Mg(2+)-binding residues include aspartate 556, aspartate 560, asparagine 700, and glutamate 708. A DDXXD motif motif is present at residues 556 to 560; that stretch reads DDLFD.

The protein belongs to the terpene synthase family. Mg(2+) is required as a cofactor. Highly expressed in leaves, and, at low levels, in roots, stems and flowers.

It is found in the plastid. It localises to the chloroplast. It catalyses the reaction ent-copalyl diphosphate = ent-atiserene + diphosphate. It functions in the pathway secondary metabolite biosynthesis; terpenoid biosynthesis. Involved in the biosynthesis of ent-kaurene diterpenoids natural products such as oridonin, miltiradiene, eriocalyxin B and nezukol, known to exhibit antitumor, anti-inflammatory and antibacterial activities. Catalyzes the conversion of ent-copalyl diphosphate (ent-CPP) to ent-atiserene. The protein is Ent-atiserene synthase KSL4, chloroplastic of Isodon rubescens (Rabdosia rubescens).